Here is a 199-residue protein sequence, read N- to C-terminus: Chromophore lyase CpcT/CpeT 2 (199 aa).

Belongs to the CpcT/CpeT biliprotein lyase family.

Functionally, covalently attaches a chromophore to Cys residue(s) of phycobiliproteins. This Synechococcus sp. (strain JA-3-3Ab) (Cyanobacteria bacterium Yellowstone A-Prime) protein is Chromophore lyase CpcT/CpeT 2.